The primary structure comprises 609 residues: MTSATIPGLDTAPTNHQKLLSWLEEVAELTHPAQVVFADGSDEEWQQLTERLVAAGTFKKLNDEKHPNSYLALSDPSDVARVESRTFICSEREIDAGPTNNWMDPAEMRSTMTELYRGCMRGRTMWVVPFCMGPPGAEDPKLGVEITDSEYVVASMKVMTRMGTSALEKIGDDGFFVKALHSVGAPLQPGQQDMPWPCNETKYITHFPETREIWSYGSGYGGNALLGKKCYSLRIASAMAHDEGWLAEHMLILKLISPENKAYYFAAAFPSACGKTNLAMLQPTIPGWRAETLGDDIAWMRFGKDGRLYAVNPEFGFFGVAPGTNWKSNPNAMRTIAAGNTVFTNVALTDDNDVWWEGLEGEPAHLIDWKGNDWYAGKTETPAAHSNSRYCTPMSQCPILAPEWDDPRGVPISVILFGARRKTTVPLVTQARNWQHGVFMGATMGSEQTAAAEGKVGTVRRDPMAMLPFMGYHVGDYFQHWIDLGKHSDESNLPKVFFVNWFRRGEGGKFLWPGFGENSRVLKWIVDRIEHKAGGQDTLIGIVPTATDLDLDGLDISSDDVAKALAVDPAEWRNELPLIEEWFEFVGDKLPSGMQDEFEALKQRLAKED.

Residues Arg81 and 220-222 (YGG) contribute to the substrate site. Mn(2+) contacts are provided by Lys229 and His249. Ser271 serves as a coordination point for substrate. 272 to 277 (ACGKTN) is a GTP binding site. Cys273 is a catalytic residue. Mn(2+) is bound at residue Asp296. 387–389 (NSR) provides a ligand contact to substrate. GTP contacts are provided by residues Arg389, Arg420, and 515 to 518 (FGEN).

The protein belongs to the phosphoenolpyruvate carboxykinase [GTP] family. Monomer. Requires Mn(2+) as cofactor.

It localises to the cytoplasm. The enzyme catalyses oxaloacetate + GTP = phosphoenolpyruvate + GDP + CO2. The protein operates within carbohydrate biosynthesis; gluconeogenesis. Catalyzes the conversion of oxaloacetate (OAA) to phosphoenolpyruvate (PEP), the rate-limiting step in the metabolic pathway that produces glucose from lactate and other precursors derived from the citric acid cycle. In Mycobacterium leprae (strain Br4923), this protein is Phosphoenolpyruvate carboxykinase [GTP].